Reading from the N-terminus, the 232-residue chain is Large ribosomal subunit protein uL1 (232 aa).

Belongs to the universal ribosomal protein uL1 family. As to quaternary structure, part of the 50S ribosomal subunit.

In terms of biological role, binds directly to 23S rRNA. The L1 stalk is quite mobile in the ribosome, and is involved in E site tRNA release. Functionally, protein L1 is also a translational repressor protein, it controls the translation of the L11 operon by binding to its mRNA. The protein is Large ribosomal subunit protein uL1 of Thermosipho melanesiensis (strain DSM 12029 / CIP 104789 / BI429).